We begin with the raw amino-acid sequence, 876 residues long: Vacuolar protein sorting-associated protein 39 homolog (876 aa).

One can recognise a CNH domain in the interval 14–310 (GVQIESIAAY…KFLVHADKGT (297 aa)). The stretch at 578–741 (ELIEVESLPR…ILIPPTQPLY (164 aa)) is one CHCR repeat.

It belongs to the VAM6/VPS39 family. As to quaternary structure, part of the homotypic fusion and vacuole protein sorting (HOPS) complex, composed of Vps16A, car/Vps33A, dor/Vps18, Vps39, Vps11 and lt/Vps41. Interacts with Rab2 (GTP-bound form); the interaction is probably direct.

The protein localises to the cytoplasm. It localises to the lysosome membrane. It is found in the late endosome membrane. Its subcellular location is the late endosome. The protein resides in the lysosome. Part of the homotypic fusion and vacuole protein sorting (HOPS) tethering complex involved in endo-lysosomal vesicle trafficking and lysosome biogenesis. The HOPS complex facilitates docking and fusion of lysosomes with late endosomes and several other types of vesicles. The HOPS complex is also involved in autophagy and crinophagy (the elimination of unused secretory granules through their fusion with lysosomes). The HOPS complex mediates autophagocitic flux, probably by binding autophagosome-associated Syx17/syntaxin 17, promoting assembly of the trans-SNARE complex and instigating autophagosome-lysosome fusion. Independent of Syx17/syntaxin 17, HOPS is involved in biosynthetic transport to lysosomes and lysosome-related organelles such as eye-pigment granules. Required for autophagocytosis-dependent remodeling of myofibrils and transverse-tubules (T-tubules) during metamorphosis. This Drosophila melanogaster (Fruit fly) protein is Vacuolar protein sorting-associated protein 39 homolog.